A 309-amino-acid chain; its full sequence is Protein FdhE (309 aa).

It belongs to the FdhE family.

It is found in the cytoplasm. Functionally, necessary for formate dehydrogenase activity. The sequence is that of Protein FdhE from Escherichia coli O139:H28 (strain E24377A / ETEC).